We begin with the raw amino-acid sequence, 554 residues long: Wee1-like protein kinase 2-B (554 aa).

2 disordered regions span residues 1–86 (MRMA…GGEC) and 145–182 (TLVNVNPFTPQSYRQTHFQPNGKRKERPEDDCSSDSQM). A Phosphoserine modification is found at S38. 2 stretches are compositionally biased toward polar residues: residues 38-48 (SPVSSWRTNNC) and 147-163 (VNVNPFTPQSYRQTHFQ). Residues 213–487 (FLEIEKIGAG…AKNSVLRRCV (275 aa)) enclose the Protein kinase domain. Residues 219–227 (IGAGEFGSV) and K242 contribute to the ATP site. The Proton acceptor role is filled by D340. N345 and D377 together coordinate Mg(2+). Positions 490–516 (AAELQKQLNVEKFKTAMLERELQAAKL) form a coiled coil.

The protein belongs to the protein kinase superfamily. Ser/Thr protein kinase family. WEE1 subfamily. As to quaternary structure, interacts with cdca3. Ubiquitinated and degraded at the onset of G2/M phase. In terms of processing, phosphorylated during M and G1 phases. Interacts with cdca3 when phosphorylated at Ser-38.

Its subcellular location is the nucleus. It carries out the reaction L-tyrosyl-[protein] + ATP = O-phospho-L-tyrosyl-[protein] + ADP + H(+). In terms of biological role, oocyte and early embryo-specific protein tyrosine kinase that phosphorylates and inhibits cdk1 and acts as a regulator of meiosis in oocytes. Required to ensure the meiotic cell cycle in oocytes by phosphorylating cdk1 at 'Tyr-15', leading to inhibit cdk1 activity and prevent meiosis. This chain is Wee1-like protein kinase 2-B (wee2-b), found in Xenopus laevis (African clawed frog).